The primary structure comprises 225 residues: Small ribosomal subunit protein uS3 (225 aa).

The KH type-2 domain occupies 38–106 (LRKFLQGKLQ…EVSLNIVEIR (69 aa)).

The protein belongs to the universal ribosomal protein uS3 family. In terms of assembly, part of the 30S ribosomal subunit. Forms a tight complex with proteins S10 and S14.

In terms of biological role, binds the lower part of the 30S subunit head. Binds mRNA in the 70S ribosome, positioning it for translation. In Rhodospirillum centenum (strain ATCC 51521 / SW), this protein is Small ribosomal subunit protein uS3.